Reading from the N-terminus, the 251-residue chain is Ribonuclease HII (251 aa).

Positions 32–223 constitute an RNase H type-2 domain; the sequence is GPVAGVDEAG…VRERLGLRPL (192 aa). The a divalent metal cation site is built by aspartate 38, glutamate 39, and aspartate 132.

Belongs to the RNase HII family. Mn(2+) serves as cofactor. Requires Mg(2+) as cofactor.

Its subcellular location is the cytoplasm. The enzyme catalyses Endonucleolytic cleavage to 5'-phosphomonoester.. In terms of biological role, endonuclease that specifically degrades the RNA of RNA-DNA hybrids. The sequence is that of Ribonuclease HII from Nocardia farcinica (strain IFM 10152).